A 257-amino-acid polypeptide reads, in one-letter code: MPGFTCCVPGCYNNSHRDRDLRFYTFPKDPTQREIWLKNISRAGVSGCFSTFQPTTGHRVCSVHFPGGRKTYTIRVPTLFPLRGVNERRSRRGRSRKVSAVVPIITSVVSTANETAPLEEDEEEGDIENTTVVQIGQNGQYIAPVDLTSSGDGSCITAVVSGGEESAVHESCSVADFALCGADHSYSLTTGTTSTELLRKLNEQRDIIALMEIKMKEMKNTIRQLRVTEARLQDELRQREQERERLICANTIIKRKL.

Residues 6-64 (CCVPGCYNNSHRDRDLRFYTFPKDPTQREIWLKNISRAGVSGCFSTFQPTTGHRVCSVH) form a THAP-type zinc finger. Residues 196–251 (ELLRKLNEQRDIIALMEIKMKEMKNTIRQLRVTEARLQDELRQREQERERLICANT) are a coiled coil.

Belongs to the THAP11 family.

The protein localises to the nucleus. It localises to the cytoplasm. Functionally, transcription factor, which has both transcriptional activation and repression activities. Binds numerous promoters of genes and therefore can be involved in many processes. Also modulates chromatin accessibility. Required for normal brain development and neural precursor differentiation. The polypeptide is THAP domain-containing protein 11 (thap11) (Danio rerio (Zebrafish)).